The chain runs to 526 residues: Putative bifunctional polymyxin resistance protein ArnA (526 aa).

Residues 1–170 are formyltransferase ArnAFT; sequence MVKRADAGAI…TLGLVQGSRL (170 aa). Residue 2-6 coordinates (6R)-10-formyltetrahydrofolate; it reads VKRAD. The tract at residues 180–526 is dehydrogenase ArnADH; sequence RRTRVLILGV…RTVDLTDKPS (347 aa). NAD(+)-binding positions include D213 and 234–235; that span reads DI. UDP-alpha-D-glucuronate is bound by residues A259, Y264, and 298 to 299; that span reads TS. Residue E300 is the Proton acceptor; for decarboxylase activity of the active site. UDP-alpha-D-glucuronate contacts are provided by residues R326, N358, 392-401, and Y479; that span reads KLIDGGKQKR. R485 serves as the catalytic Proton donor; for decarboxylase activity.

In the N-terminal section; belongs to the Fmt family. UDP-L-Ara4N formyltransferase subfamily. It in the C-terminal section; belongs to the NAD(P)-dependent epimerase/dehydratase family. UDP-glucuronic acid decarboxylase subfamily. Homohexamer, formed by a dimer of trimers.

It carries out the reaction UDP-alpha-D-glucuronate + NAD(+) = UDP-beta-L-threo-pentopyranos-4-ulose + CO2 + NADH. It catalyses the reaction UDP-4-amino-4-deoxy-beta-L-arabinose + (6R)-10-formyltetrahydrofolate = UDP-4-deoxy-4-formamido-beta-L-arabinose + (6S)-5,6,7,8-tetrahydrofolate + H(+). Its pathway is nucleotide-sugar biosynthesis; UDP-4-deoxy-4-formamido-beta-L-arabinose biosynthesis; UDP-4-deoxy-4-formamido-beta-L-arabinose from UDP-alpha-D-glucuronate: step 1/3. It participates in nucleotide-sugar biosynthesis; UDP-4-deoxy-4-formamido-beta-L-arabinose biosynthesis; UDP-4-deoxy-4-formamido-beta-L-arabinose from UDP-alpha-D-glucuronate: step 3/3. The protein operates within bacterial outer membrane biogenesis; lipopolysaccharide biosynthesis. In terms of biological role, bifunctional enzyme that catalyzes the oxidative decarboxylation of UDP-glucuronic acid (UDP-GlcUA) to UDP-4-keto-arabinose (UDP-Ara4O) and the addition of a formyl group to UDP-4-amino-4-deoxy-L-arabinose (UDP-L-Ara4N) to form UDP-L-4-formamido-arabinose (UDP-L-Ara4FN). The modified arabinose is attached to lipid A and is required for resistance to polymyxin and cationic antimicrobial peptides. The chain is Putative bifunctional polymyxin resistance protein ArnA (arnA) from Shigella boydii serotype 18 (strain CDC 3083-94 / BS512).